A 399-amino-acid chain; its full sequence is Arginase (399 aa).

Residues histidine 193, aspartate 216, histidine 218, and aspartate 220 each coordinate Mn(2+). Substrate is bound by residues 218 to 222 (HADIN), 229 to 231 (SGN), and aspartate 273. Aspartate 322 and aspartate 324 together coordinate Mn(2+). 2 residues coordinate substrate: threonine 336 and glutamate 367.

Belongs to the arginase family. Mn(2+) serves as cofactor.

The protein localises to the cytoplasm. It carries out the reaction L-arginine + H2O = urea + L-ornithine. Its pathway is nitrogen metabolism; urea cycle; L-ornithine and urea from L-arginine: step 1/1. This Eremothecium gossypii (strain ATCC 10895 / CBS 109.51 / FGSC 9923 / NRRL Y-1056) (Yeast) protein is Arginase (CAR1).